Here is a 718-residue protein sequence, read N- to C-terminus: Catalase-peroxidase (718 aa).

A cross-link (tryptophyl-tyrosyl-methioninium (Trp-Tyr) (with M-245)) is located at residues 98-219; it reads WHAAGTYRMG…LAATEMGLIY (122 aa). Residue His99 is the Proton acceptor of the active site. The segment at residues 219–245 is a cross-link (tryptophyl-tyrosyl-methioninium (Tyr-Met) (with W-98)); sequence YVNPEGPQASGDPRSAAPFIRATFGNM. Residue His260 coordinates heme b.

It belongs to the peroxidase family. Peroxidase/catalase subfamily. In terms of assembly, homodimer or homotetramer. Heme b serves as cofactor. Formation of the three residue Trp-Tyr-Met cross-link is important for the catalase, but not the peroxidase activity of the enzyme.

It carries out the reaction H2O2 + AH2 = A + 2 H2O. The catalysed reaction is 2 H2O2 = O2 + 2 H2O. Its function is as follows. Bifunctional enzyme with both catalase and broad-spectrum peroxidase activity. This is Catalase-peroxidase from Acinetobacter baumannii (strain ATCC 17978 / DSM 105126 / CIP 53.77 / LMG 1025 / NCDC KC755 / 5377).